Reading from the N-terminus, the 423-residue chain is tRNA(Ile)-lysidine synthase (423 aa).

An ATP-binding site is contributed by 29 to 34; sequence SGGKDS.

This sequence belongs to the tRNA(Ile)-lysidine synthase family.

Its subcellular location is the cytoplasm. The catalysed reaction is cytidine(34) in tRNA(Ile2) + L-lysine + ATP = lysidine(34) in tRNA(Ile2) + AMP + diphosphate + H(+). Functionally, ligates lysine onto the cytidine present at position 34 of the AUA codon-specific tRNA(Ile) that contains the anticodon CAU, in an ATP-dependent manner. Cytidine is converted to lysidine, thus changing the amino acid specificity of the tRNA from methionine to isoleucine. In Lactococcus lactis subsp. lactis (strain IL1403) (Streptococcus lactis), this protein is tRNA(Ile)-lysidine synthase.